The chain runs to 179 residues: Large ribosomal subunit protein uL6 (179 aa).

Belongs to the universal ribosomal protein uL6 family. As to quaternary structure, part of the 50S ribosomal subunit.

This protein binds to the 23S rRNA, and is important in its secondary structure. It is located near the subunit interface in the base of the L7/L12 stalk, and near the tRNA binding site of the peptidyltransferase center. The protein is Large ribosomal subunit protein uL6 of Synechocystis sp. (strain ATCC 27184 / PCC 6803 / Kazusa).